Reading from the N-terminus, the 54-residue chain is Ovomucoid (54 aa).

Positions 4–54 (VDCSDYPKPVCSPENMPVCGSDSKTYSNKCDFCNAVADSNGTLTLSHFGKC) constitute a Kazal-like domain. Disulfide bonds link Cys6–Cys36, Cys14–Cys33, and Cys22–Cys54. An N-linked (GlcNAc...) asparagine glycan is attached at Asn43.

It is found in the secreted. The chain is Ovomucoid from Nycticorax nycticorax (Black-crowned night-heron).